We begin with the raw amino-acid sequence, 325 residues long: Glutarate 2-hydroxylase (325 aa).

Residues His-160, Asp-162, and His-292 each coordinate Fe cation.

Belongs to the glutarate hydroxylase family. Homotetramer. Requires Fe(2+) as cofactor.

It catalyses the reaction glutarate + 2-oxoglutarate + O2 = (S)-2-hydroxyglutarate + succinate + CO2. The protein operates within amino-acid degradation. Its function is as follows. Acts as an alpha-ketoglutarate-dependent dioxygenase catalyzing hydroxylation of glutarate (GA) to L-2-hydroxyglutarate (L2HG). Functions in a L-lysine degradation pathway that proceeds via cadaverine, glutarate and L-2-hydroxyglutarate. The protein is Glutarate 2-hydroxylase of Escherichia coli (strain K12 / MC4100 / BW2952).